A 138-amino-acid chain; its full sequence is Translation initiation factor 2 subunit beta (138 aa).

The protein belongs to the eIF-2-beta/eIF-5 family. In terms of assembly, heterotrimer composed of an alpha, a beta and a gamma chain.

Its function is as follows. eIF-2 functions in the early steps of protein synthesis by forming a ternary complex with GTP and initiator tRNA. The chain is Translation initiation factor 2 subunit beta from Methanococcus maripaludis (strain C5 / ATCC BAA-1333).